An 887-amino-acid chain; its full sequence is Bifunctional uridylyltransferase/uridylyl-removing enzyme (887 aa).

The tract at residues 1 to 337 (MINTSPLLNY…RLPNYERKIE (337 aa)) is uridylyltransferase. The tract at residues 339 to 699 (VNDHFKIVDN…AHRKAAQDAV (361 aa)) is uridylyl-removing. Positions 457-579 (VDAHTLLLLR…LGDMEHLDYL (123 aa)) constitute an HD domain. ACT domains follow at residues 700–782 (QIFI…LMQR) and 809–887 (MVEI…ICQH).

The protein belongs to the GlnD family. Mg(2+) is required as a cofactor.

It catalyses the reaction [protein-PII]-L-tyrosine + UTP = [protein-PII]-uridylyl-L-tyrosine + diphosphate. It carries out the reaction [protein-PII]-uridylyl-L-tyrosine + H2O = [protein-PII]-L-tyrosine + UMP + H(+). Its activity is regulated as follows. Uridylyltransferase (UTase) activity is inhibited by glutamine, while glutamine activates uridylyl-removing (UR) activity. Functionally, modifies, by uridylylation and deuridylylation, the PII regulatory proteins (GlnB and homologs), in response to the nitrogen status of the cell that GlnD senses through the glutamine level. Under low glutamine levels, catalyzes the conversion of the PII proteins and UTP to PII-UMP and PPi, while under higher glutamine levels, GlnD hydrolyzes PII-UMP to PII and UMP (deuridylylation). Thus, controls uridylylation state and activity of the PII proteins, and plays an important role in the regulation of nitrogen assimilation and metabolism. The protein is Bifunctional uridylyltransferase/uridylyl-removing enzyme of Acinetobacter baumannii (strain ACICU).